The chain runs to 256 residues: ATP synthase subunit a (256 aa).

Residues 1-8 constitute a propeptide, removed in mature form; that stretch reads MYQFNFIL. Helical transmembrane passes span 34-54, 92-112, 121-141, 148-168, 186-206, 209-229, and 230-250; these read ITNI…YHLL, YFPF…IGMV, HFIL…FLGL, FFSL…LVLI, ANIL…YNIM, GILF…FSGL, and ELAI…SYIK.

It belongs to the ATPase A chain family. In terms of assembly, F-type ATPases have 2 components, CF(1) - the catalytic core - and CF(0) - the membrane proton channel. CF(1) has five subunits: alpha(3), beta(3), gamma(1), delta(1), epsilon(1). CF(0) has three main subunits: a, b and c.

Its subcellular location is the mitochondrion inner membrane. In terms of biological role, mitochondrial membrane ATP synthase (F(1)F(0) ATP synthase or Complex V) produces ATP from ADP in the presence of a proton gradient across the membrane which is generated by electron transport complexes of the respiratory chain. F-type ATPases consist of two structural domains, F(1) - containing the extramembraneous catalytic core and F(0) - containing the membrane proton channel, linked together by a central stalk and a peripheral stalk. During catalysis, ATP synthesis in the catalytic domain of F(1) is coupled via a rotary mechanism of the central stalk subunits to proton translocation. Key component of the proton channel; it may play a direct role in the translocation of protons across the membrane. The sequence is that of ATP synthase subunit a (atp6) from Emericella nidulans (Aspergillus nidulans).